A 139-amino-acid chain; its full sequence is Transcription antitermination protein NusB (139 aa).

Belongs to the NusB family.

Functionally, involved in transcription antitermination. Required for transcription of ribosomal RNA (rRNA) genes. Binds specifically to the boxA antiterminator sequence of the ribosomal RNA (rrn) operons. The polypeptide is Transcription antitermination protein NusB (Baumannia cicadellinicola subsp. Homalodisca coagulata).